The primary structure comprises 453 residues: F-box protein SKIP14 (453 aa).

Residues 34–104 form the F-box; degenerate domain; it reads RKNTGGDASS…NRQQLFAGLS (71 aa).

As to quaternary structure, part of a SCF (ASK-cullin-F-box) protein ligase complex. Interacts with CUL1, SKP1A/ASK1 and SPK1B/ASK2.

It functions in the pathway protein modification; protein ubiquitination. Functionally, component of SCF(ASK-cullin-F-box) E3 ubiquitin ligase complexes, which may mediate the ubiquitination and subsequent proteasomal degradation of target proteins. This Arabidopsis thaliana (Mouse-ear cress) protein is F-box protein SKIP14 (SKIP14).